Consider the following 146-residue polypeptide: Hemoglobin cathodic subunit beta (146 aa).

Positions 2 to 146 (EWSASERSTI…VVSALSKQYF (145 aa)) constitute a Globin domain. Heme b is bound by residues His63 and His92.

The protein belongs to the globin family. As to quaternary structure, heterotetramer of two alpha chains and two beta chains. As to expression, red blood cells.

Functionally, involved in oxygen transport from gills to the various peripheral tissues. This is Hemoglobin cathodic subunit beta (hbb2) from Anguilla anguilla (European freshwater eel).